The following is a 453-amino-acid chain: uncharacterized protein (453 aa).

This is an uncharacterized protein from Magallana gigas (Pacific oyster).